The chain runs to 340 residues: Glutaminyl-peptide cyclotransferase (340 aa).

Residues 1–23 (MAIGSVVFAAAGLLLLLLPPSHQ) form the signal peptide. Asn-42 carries N-linked (GlcNAc...) asparagine glycosylation. 2 residues coordinate alpha-D-mannopyranose: Arg-85 and Glu-91. A disulfide bond links Cys-113 and Cys-136. Asp-131 is a Zn(2+) binding site. Positions 151 and 155 each coordinate alpha-D-mannopyranose. Asn-156 carries an N-linked (GlcNAc...) asparagine glycan. Glu-170 functions as the Proton acceptor in the catalytic mechanism. Glu-171 is a Zn(2+) binding site. The active-site Proton acceptor is the Asp-218. Residue His-297 coordinates Zn(2+). Leu-306 is an alpha-D-mannopyranose binding site.

The protein belongs to the glutaminyl-peptide cyclotransferase family.

The protein resides in the secreted. It carries out the reaction N-terminal L-glutaminyl-[peptide] = N-terminal 5-oxo-L-prolyl-[peptide] + NH4(+). Inhibited by imidazoles (imidazole, benzimidazole, 1-benzylimidazole, 1-methylimidazole, P150/03, N-omega-acetylhistamine and 4-methylimidazole) and cysteamines (cysteamine, N-dimethylcysteamine and N-diethylcysteamine). Partially inhibited by PDB50 1(3,4-dimethoxyphenyl)-3-(3-imidazol-1-ylpropyl)thiourea. Acts as a glutaminyl-peptide cyclotransferase. Responsible for the biosynthesis of pyroglutamyl peptides. Might be more efficient in the conversion of tri and tetrapeptides in vitro. Might have a relative preference for substrates containing hydrophobic amino acids in vitro. This chain is Glutaminyl-peptide cyclotransferase, found in Drosophila melanogaster (Fruit fly).